A 210-amino-acid polypeptide reads, in one-letter code: Ribosomal RNA large subunit methyltransferase E (210 aa).

G61, W63, D81, D97, and D122 together coordinate S-adenosyl-L-methionine. The active-site Proton acceptor is the K162.

The protein belongs to the class I-like SAM-binding methyltransferase superfamily. RNA methyltransferase RlmE family.

It is found in the cytoplasm. It catalyses the reaction uridine(2552) in 23S rRNA + S-adenosyl-L-methionine = 2'-O-methyluridine(2552) in 23S rRNA + S-adenosyl-L-homocysteine + H(+). In terms of biological role, specifically methylates the uridine in position 2552 of 23S rRNA at the 2'-O position of the ribose in the fully assembled 50S ribosomal subunit. The sequence is that of Ribosomal RNA large subunit methyltransferase E from Xanthomonas campestris pv. campestris (strain 8004).